The primary structure comprises 179 residues: MEMRGTTILAVKDDKGTAMIGDGQVTMGQAVVMKHSAVKVRTLYNDQVIAGFAGATADAFTLFERFEKKLKTYSGNLVRSAVEMATDWRTDKFLRKLEAMIMVADAEHILIISGNGDVIEPDDGVAAIGSGGSYALSAARALMRNTDMPAADIAQKSMEIASEICVYTNDHFVLKTLEK.

Threonine 6 is a catalytic residue. Na(+)-binding residues include serine 162, cysteine 165, and threonine 168.

Belongs to the peptidase T1B family. HslV subfamily. In terms of assembly, a double ring-shaped homohexamer of HslV is capped on each side by a ring-shaped HslU homohexamer. The assembly of the HslU/HslV complex is dependent on binding of ATP.

It localises to the cytoplasm. The catalysed reaction is ATP-dependent cleavage of peptide bonds with broad specificity.. With respect to regulation, allosterically activated by HslU binding. Protease subunit of a proteasome-like degradation complex believed to be a general protein degrading machinery. The chain is ATP-dependent protease subunit HslV from Maridesulfovibrio salexigens (strain ATCC 14822 / DSM 2638 / NCIMB 8403 / VKM B-1763) (Desulfovibrio salexigens).